A 257-amino-acid polypeptide reads, in one-letter code: Ras-related protein Rab-26 (257 aa).

The disordered stretch occupies residues 1–53 (MSRKKTPKSKGGSVPAASTLPAAANGPRLAHPRTARPGPEAPPNGPPQSGRPS). Positions 73, 74, 75, 76, 77, 78, 79, 96, and 97 each coordinate GTP. Thr-78 contributes to the Mg(2+) binding site. 2 short sequence motifs (switch) span residues 87-102 (GAFL…GIDF) and 120-137 (DTAG…YYRD). Residues Thr-97 and Asp-120 each coordinate Mg(2+). Gly-123, Asn-178, Lys-179, Asp-181, Ala-209, and Lys-210 together coordinate GTP. 2 S-geranylgeranyl cysteine lipidation sites follow: Cys-254 and Cys-255.

Belongs to the small GTPase superfamily. Rab family. Interacts with ADRA2B. Interacts with RIMS1. Mg(2+) is required as a cofactor. Expressed in pancreas, kidney, brain, submandibular gland, and lung.

The protein resides in the cytoplasmic vesicle. The protein localises to the secretory vesicle membrane. It localises to the golgi apparatus membrane. It catalyses the reaction GTP + H2O = GDP + phosphate + H(+). Its activity is regulated as follows. Regulated by guanine nucleotide exchange factors (GEFs) which promote the exchange of bound GDP for free GTP. Regulated by GTPase activating proteins (GAPs) which increase the GTP hydrolysis activity. Inhibited by GDP dissociation inhibitors (GDIs). The small GTPases Rab are key regulators of intracellular membrane trafficking, from the formation of transport vesicles to their fusion with membranes. Rabs cycle between an inactive GDP-bound form and an active GTP-bound form that is able to recruit to membranes different set of downstream effectors directly responsible for vesicle formation, movement, tethering and fusion. RAB26 mediates transport of ADRA2A and ADRA2B from the Golgi to the cell membrane. Plays a role in the maturation of zymogenic granules and in pepsinogen secretion in the stomach. Plays a role in the secretion of amylase from acinar granules in the parotid gland. The chain is Ras-related protein Rab-26 from Rattus norvegicus (Rat).